We begin with the raw amino-acid sequence, 1277 residues long: Membrane-associated guanylate kinase, WW and PDZ domain-containing protein 2 (1277 aa).

Positions 17-101 (ESVIGRNPEG…PLRLKCVKQG (85 aa)) constitute a PDZ domain. One can recognise a Guanylate kinase-like domain in the interval 109–283 (RHYLNLRFQK…APVYSQPEEL (175 aa)). The disordered stretch occupies residues 205 to 308 (PGATPSAEGK…EDSDPLPDNW (104 aa)). Positions 281-296 (EELKDQMDDTKSTKPE) are enriched in basic and acidic residues. WW domains follow at residues 302–335 (DPLP…DPRL) and 348–381 (NELP…NPVL). The tract at residues 302 to 381 (DPLPDNWEMA…RRTQFENPVL (80 aa)) is interaction with DDN. Tyr-362 bears the Phosphotyrosine mark. The PDZ 1 domain occupies 426–510 (STTLKKSNMG…SVNLVLCRGY (85 aa)). A disordered region spans residues 556–575 (QSVPDITDRPPHSLHSMPAD). A PDZ 2 domain is found at 605-683 (TLTIVKGAKG…ETSLIIHRGG (79 aa)). Ser-686 is subject to Phosphoserine. The PDZ 3 domain occupies 778-860 (DVHLRRMESG…NGQVNLTVRR (83 aa)). Position 827 is a phosphotyrosine (Tyr-827). Residues 869–913 (CPENGRSPGSVSTHHSSPRSDYATYANSNHAAPSNNASPPEGFAS) form a disordered region. A phosphoserine mark is found at Ser-884 and Ser-885. The segment covering 894 to 908 (ANSNHAAPSNNASPP) has biased composition (low complexity). The PDZ 4 domain maps to 920–1010 (DVIIHRKENE…SVTLRIIPQE (91 aa)). A compositionally biased stretch (polar residues) spans 1011–1042 (ELNNPTSAPSSEKQSPMAQQHSPLAQQHSPLA). Residues 1011-1130 (ELNNPTSAPS…PDTRQYPLSD (120 aa)) form a disordered region. Residues 1069–1085 (NSYRSEVKARQDVKPDI) are compositionally biased toward basic and acidic residues. The PDZ 5 domain maps to 1141 to 1223 (TVDMEKGAKG…RVRLLLKRGT (83 aa)).

The protein belongs to the MAGUK family. In terms of assembly, interacts (via its WW domains) with DRPLA. Interacts with CTNNB1, ACVR2A, SMAD2 and SMAD3. Part of a complex consisting of MAGI2/ARIP1, ACVR2A, ACVR1B and SMAD3. May interact with HTR2A and IGSF9. Interacts with HTR4. Interacts (via guanylate kinase domain) with DLGAP1. Interacts (via PDZ domains) with GRIN2A, GRID2 and NLGN1. Interacts with CTNND2. Interacts with MAGUIN-1. Interacts (via its second PDZ domain) with PTEN (via unphosphorylated C-terminus); this interaction diminishes the degradation rate of PTEN. Found in a complex, at least composed of KIDINS220, MAGI2, NTRK1 and RAPGEF2; the complex is mainly formed at late endosomes in a NGF-dependent manner. Interacts with RAPGEF2; the interaction occurs before or after nerve growth factor (NGF) stimulation. Isoform 1 interacts (via PDZ domain) with KIDINS220 isoform 2 (via C-terminal domain). Interacts with DDN. Identified in a complex with ACTN4, CASK, IQGAP1, NPHS1, SPTAN1 and SPTBN1. Interacts with DLL1. Found in a complex with IGSF9B and NLGN2; the interaction with IGSF9B is mediated via the PDZ 5 and PDZ 6 domains, while the interaction with NLGN2 is mediated via the WW1, WW2 and PDZ2 domains. Interacts (via PDZ 6 domain) with USH1G (via SAM domain); the interaction is triggered by phosphorylation of USH1G by CK2 and negatively regulates MAGI2-mediated endocytosis. Expressed in the foot process layer of podocytes of the kidney glomeruli but not in tubules (at protein level). Expressed in the brain.

The protein localises to the cytoplasm. Its subcellular location is the late endosome. It is found in the synapse. The protein resides in the synaptosome. It localises to the cell membrane. The protein localises to the cytoskeleton. Its subcellular location is the microtubule organizing center. It is found in the centrosome. The protein resides in the cell projection. It localises to the cilium. The protein localises to the centriole. Its subcellular location is the photoreceptor inner segment. It is found in the photoreceptor outer segment. Functionally, seems to act as scaffold molecule at synaptic junctions by assembling neurotransmitter receptors and cell adhesion proteins. Plays a role in nerve growth factor (NGF)-induced recruitment of RAPGEF2 to late endosomes and neurite outgrowth. May play a role in regulating activin-mediated signaling in neuronal cells. Enhances the ability of PTEN to suppress AKT1 activation. Plays a role in receptor-mediated clathrin-dependent endocytosis which is required for ciliogenesis. The polypeptide is Membrane-associated guanylate kinase, WW and PDZ domain-containing protein 2 (Magi2) (Rattus norvegicus (Rat)).